A 270-amino-acid polypeptide reads, in one-letter code: Proteasome subunit beta (270 aa).

The propeptide at 1–47 (MSNRGRLGDAFLRPGSSSFLDFLSDHAPELLPGRSAAAGNAPLAPHA) is removed in mature form; by autocatalysis. The active-site Nucleophile is Thr48.

The protein belongs to the peptidase T1B family. In terms of assembly, the 20S proteasome core is composed of 14 alpha and 14 beta subunits that assemble into four stacked heptameric rings, resulting in a barrel-shaped structure. The two inner rings, each composed of seven catalytic beta subunits, are sandwiched by two outer rings, each composed of seven alpha subunits. The catalytic chamber with the active sites is on the inside of the barrel. Has a gated structure, the ends of the cylinder being occluded by the N-termini of the alpha-subunits. Is capped by the proteasome-associated ATPase, ARC.

Its subcellular location is the cytoplasm. It catalyses the reaction Cleavage of peptide bonds with very broad specificity.. The protein operates within protein degradation; proteasomal Pup-dependent pathway. The formation of the proteasomal ATPase ARC-20S proteasome complex, likely via the docking of the C-termini of ARC into the intersubunit pockets in the alpha-rings, may trigger opening of the gate for substrate entry. Interconversion between the open-gate and close-gate conformations leads to a dynamic regulation of the 20S proteasome proteolysis activity. Functionally, component of the proteasome core, a large protease complex with broad specificity involved in protein degradation. The protein is Proteasome subunit beta of Xylanimonas cellulosilytica (strain DSM 15894 / JCM 12276 / CECT 5975 / KCTC 9989 / LMG 20990 / NBRC 107835 / XIL07).